Here is a 362-residue protein sequence, read N- to C-terminus: MSQNSLRLVEDKTVDKSKALEAALSQIERSFGKGSIMKLGANEKIVEVETVSTGSLSLDIALGIGGLPKGRIIEIYGPESSGKTTLALQTIAEAQKKGGVCAFVDAEHALDPVYARKLGVDLQNLLISQPDTGEQALEITDTLVRSGAIDVLVIDSVAALTPKAEIEGEMGDSLPGMQARLMSQALRKLTGSISRSNCMVVFINQIRMKIGVMFGSPETTTGGNALKFYASVRLDIRRIGAVKDREEIVGNQTRVKVVKNKMAPPFKQVEFDIMYGEGVSKTGELVDLGVKAGIVEKAGAWFSYNSQRLGQGRENAKIFLRDNPAVADEIETALRQNAGLIAERFLENGGPDANDSVGLDDA.

77 to 84 serves as a coordination point for ATP; it reads GPESSGKT.

It belongs to the RecA family.

The protein resides in the cytoplasm. Can catalyze the hydrolysis of ATP in the presence of single-stranded DNA, the ATP-dependent uptake of single-stranded DNA by duplex DNA, and the ATP-dependent hybridization of homologous single-stranded DNAs. It interacts with LexA causing its activation and leading to its autocatalytic cleavage. This chain is Protein RecA, found in Allorhizobium ampelinum (strain ATCC BAA-846 / DSM 112012 / S4) (Agrobacterium vitis (strain S4)).